The primary structure comprises 367 residues: tRNA/tmRNA (uracil-C(5))-methyltransferase (367 aa).

5 residues coordinate S-adenosyl-L-methionine: Gln190, Tyr218, Asn223, Glu239, and Asp299. Cys324 (nucleophile) is an active-site residue. The active-site Proton acceptor is Glu358.

The protein belongs to the class I-like SAM-binding methyltransferase superfamily. RNA M5U methyltransferase family. TrmA subfamily.

It catalyses the reaction uridine(54) in tRNA + S-adenosyl-L-methionine = 5-methyluridine(54) in tRNA + S-adenosyl-L-homocysteine + H(+). It carries out the reaction uridine(341) in tmRNA + S-adenosyl-L-methionine = 5-methyluridine(341) in tmRNA + S-adenosyl-L-homocysteine + H(+). Its function is as follows. Dual-specificity methyltransferase that catalyzes the formation of 5-methyluridine at position 54 (m5U54) in all tRNAs, and that of position 341 (m5U341) in tmRNA (transfer-mRNA). The chain is tRNA/tmRNA (uracil-C(5))-methyltransferase from Musicola paradisiaca (strain Ech703) (Dickeya paradisiaca).